The sequence spans 439 residues: Ribosomal protein uS12 methylthiotransferase RimO (439 aa).

The 113-residue stretch at K5 to S117 folds into the MTTase N-terminal domain. [4Fe-4S] cluster-binding residues include C14, C48, C80, C149, C153, and C156. The Radical SAM core domain occupies T135–R363. The 72-residue stretch at E366–K437 folds into the TRAM domain.

It belongs to the methylthiotransferase family. RimO subfamily. It depends on [4Fe-4S] cluster as a cofactor.

It is found in the cytoplasm. It carries out the reaction L-aspartate(89)-[ribosomal protein uS12]-hydrogen + (sulfur carrier)-SH + AH2 + 2 S-adenosyl-L-methionine = 3-methylsulfanyl-L-aspartate(89)-[ribosomal protein uS12]-hydrogen + (sulfur carrier)-H + 5'-deoxyadenosine + L-methionine + A + S-adenosyl-L-homocysteine + 2 H(+). Its function is as follows. Catalyzes the methylthiolation of an aspartic acid residue of ribosomal protein uS12. The polypeptide is Ribosomal protein uS12 methylthiotransferase RimO (Sulfurovum sp. (strain NBC37-1)).